The primary structure comprises 449 residues: Allantoinase (449 aa).

Residues H61, H63, K148, H184, H240, and D313 each coordinate Zn(2+). The residue at position 148 (K148) is an N6-carboxylysine.

It belongs to the metallo-dependent hydrolases superfamily. Allantoinase family. In terms of assembly, homotetramer. Zn(2+) is required as a cofactor. Carboxylation allows a single lysine to coordinate two zinc ions.

It carries out the reaction (S)-allantoin + H2O = allantoate + H(+). Its pathway is nitrogen metabolism; (S)-allantoin degradation; allantoate from (S)-allantoin: step 1/1. Catalyzes the conversion of allantoin (5-ureidohydantoin) to allantoic acid by hydrolytic cleavage of the five-member hydantoin ring. In Desulfitobacterium hafniense (strain Y51), this protein is Allantoinase.